Here is a 379-residue protein sequence, read N- to C-terminus: Glutamate 5-kinase (379 aa).

Lys19 serves as a coordination point for ATP. Substrate is bound by residues Ser59, Asp146, and Asn158. 178-179 (TD) provides a ligand contact to ATP. The region spanning 285-363 (RGAVTVDAGA…SEFERLLGYV (79 aa)) is the PUA domain.

Belongs to the glutamate 5-kinase family.

The protein localises to the cytoplasm. The enzyme catalyses L-glutamate + ATP = L-glutamyl 5-phosphate + ADP. It functions in the pathway amino-acid biosynthesis; L-proline biosynthesis; L-glutamate 5-semialdehyde from L-glutamate: step 1/2. Its function is as follows. Catalyzes the transfer of a phosphate group to glutamate to form L-glutamate 5-phosphate. The chain is Glutamate 5-kinase from Variovorax paradoxus (strain S110).